We begin with the raw amino-acid sequence, 408 residues long: tRNA-specific 2-thiouridylase MnmA (408 aa).

ATP contacts are provided by residues 27–34 (AMSGGVDS) and Leu-53. Cys-121 functions as the Nucleophile in the catalytic mechanism. Cysteines 121 and 222 form a disulfide. Gly-145 is a binding site for ATP. Residues 172-174 (RDQ) form an interaction with tRNA region. Cys-222 (cysteine persulfide intermediate) is an active-site residue.

It belongs to the MnmA/TRMU family.

The protein localises to the cytoplasm. It carries out the reaction S-sulfanyl-L-cysteinyl-[protein] + uridine(34) in tRNA + AH2 + ATP = 2-thiouridine(34) in tRNA + L-cysteinyl-[protein] + A + AMP + diphosphate + H(+). Functionally, catalyzes the 2-thiolation of uridine at the wobble position (U34) of tRNA, leading to the formation of s(2)U34. The protein is tRNA-specific 2-thiouridylase MnmA of Rhizobium etli (strain ATCC 51251 / DSM 11541 / JCM 21823 / NBRC 15573 / CFN 42).